The chain runs to 659 residues: Pentatricopeptide repeat-containing protein At3g26782, mitochondrial (659 aa).

The transit peptide at 1-24 (MKVRSKKALFCSVSRLLHTERHTE) directs the protein to the mitochondrion. PPR repeat units follow at residues 40–74 (DVFS…SLYP), 75–109 (TRSS…GYQS), 110–144 (DIFV…NIVS), 145–171 (WTSM…LLVD), 182–216 (DSMG…GFDR), 217–249 (GVSV…IVDK), 250–284 (DRVS…KVVT), 286–320 (NAIT…GLED), 321–351 (DVIV…MKNK), 352–386 (NVRS…GVRP), 387–422 (NYIT…GVEP), and 423–453 (GLEH…MKMK). The interval 458–533 (IWSSLLAACR…PPGFSLLELN (76 aa)) is type E motif. Residues 534–564 (GEVHVFLIGDEEHPQREKIYEFLAELNRKLL) are type E(+) motif. The tract at residues 565 to 659 (EAGYVSNTSS…DGGCSCGDYW (95 aa)) is type DYW motif.

Belongs to the PPR family. PCMP-H subfamily.

The protein localises to the mitochondrion. The polypeptide is Pentatricopeptide repeat-containing protein At3g26782, mitochondrial (PCMP-H34) (Arabidopsis thaliana (Mouse-ear cress)).